We begin with the raw amino-acid sequence, 403 residues long: MQHHHHSSYGGGGGGYPGQAYRQQQPYYGQPSPQPYAQPPPPNYQRPSGYGPPPSGGHMYQQGPPAPYQQHNSYQGGHGRPAPPPTDPVAFGHGAPQGYNFQYSRCTGKRKALLIGINYFGQKGQLRGCINDVKNMSTYLNQNFGYAREDMVLLTDDQQNPMSQPTKANILRAMHWLVKDAQPNDSLFFHYSGHGGQTPDLDGDEDDGYDEVIYPVDFRVAGHIVDDEMHRIMVNPLKPGTRLTAIFDSCHSGSALDLPYIYSTQGILKEPNLAKEAGQGLLGVVSAYARGDMGSMVSTAVGFLKKAAKGDEAYERTKQTKTSPADVIMWSGSKDSQTSSDAQIQGQATGAMSWAFISALRKNPQQSYVQLLNSIRDELATKYSQKPQLSCSHPLDVNLLYVM.

The interval 1 to 93 (MQHHHHSSYG…PPTDPVAFGH (93 aa)) is disordered. A compositionally biased stretch (low complexity) spans 18–31 (GQAYRQQQPYYGQP). Pro residues predominate over residues 32–55 (SPQPYAQPPPPNYQRPSGYGPPPS). Residues His-194 and Cys-250 contribute to the active site.

The protein belongs to the peptidase C14B family.

In terms of biological role, involved in cell death (apoptosis). This is Metacaspase-1A (casA) from Aspergillus terreus (strain NIH 2624 / FGSC A1156).